The primary structure comprises 61 residues: Large ribosomal subunit protein bL28 (61 aa).

The protein belongs to the bacterial ribosomal protein bL28 family.

In Lactobacillus johnsonii (strain CNCM I-12250 / La1 / NCC 533), this protein is Large ribosomal subunit protein bL28.